The primary structure comprises 764 residues: MNGEADCPTDLEMAAPKGQDRWSQEDMLTLLECMKNNLPSNDSSKFKTTESHMDWEKVAFKDFSGDMCKLKWVEISNEVRKFRTLTELILDAQEHVKNPYKGKKLKKHPDFPKKPLTPYFRFFMEKRAKYAKLHPEMSNLDLTKILSKKYKELPEKKKMKYIQDFQREKQEFERNLARFREDHPDLIQNAKKSDIPEKPKTPQQLWYTHEKKVYLKVRPDATTKEVKDSLGKQWSQLSDKKRLKWIHKALEQRKEYEEIMRDYIQKHPELNISEEGITKSTLTKAERQLKDKFDGRPTKPPPNSYSLYCAELMANMKDVPSTERMVLCSQQWKLLSQKEKDAYHKKCDQKKKDYEVELLRFLESLPEEEQQRVLGEEKMLNINKKQTTSPASKKPSQEGGKGGSEKPKRPVSAMFIFSEEKRRQLQEERPELSESELTRLLARMWNDLSEKKKAKYKAREAALKAQSERKPGGEREDRGKLPESPKRAEEIWQQSVIGDYLARFKNDRVKALKAMEMTWNNMEKKEKLMWIKKAAEDQKRYERELSEMRAPPAATNSSKKMKFQGEPKKPPMNGYQKFSQELLSNGELNHLPLKERMVEIGSRWQRISQSQKEHYKKLAEEQQRQYKVHLDLWVKSLSPQDRAAYKEYISNKRKNMTKLRGPNPKSSRTTLQSKSESEEDDDEEDDDDDDEEEEEDDENGDSSEDGGDSSESSSEDESEDGDENEDDDDDEDDDEDDDEDEDNESEGSSSSSSSSGDSSDSDSN.

N-acetylmethionine is present on Met-1. The segment at 1 to 21 is disordered; it reads MNGEADCPTDLEMAAPKGQDR. DNA-binding regions (HMG box) lie at residues 112-180 and 196-264; these read PKKP…ARFR and PEKP…RDYI. Thr-201 bears the Phosphothreonine mark. 3 positions are modified to phosphoserine: Ser-273, Ser-336, and Ser-364. A DNA-binding region (HMG box 3) is located at residues 298–362; it reads TKPPPNSYSL…DYEVELLRFL (65 aa). Residues 370-379 show a composition bias toward basic and acidic residues; it reads QQRVLGEEKM. The segment at 370-411 is disordered; the sequence is QQRVLGEEKMLNINKKQTTSPASKKPSQEGGKGGSEKPKRPV. Residues Ser-389, Ser-412, Ser-433, Ser-435, Ser-484, Ser-495, Ser-546, Ser-584, and Ser-638 each carry the phosphoserine modification. 3 consecutive DNA-binding regions (HMG box) follow at residues 407–475, 482–549, and 568–634; these read PKRP…GGER, PESP…SEMR, and KKPP…DLWV. A disordered region spans residues 456–488; sequence YKAREAALKAQSERKPGGEREDRGKLPESPKRA. The span at 457–488 shows a compositional bias: basic and acidic residues; that stretch reads KAREAALKAQSERKPGGEREDRGKLPESPKRA. Residues 546 to 576 form a disordered region; sequence SEMRAPPAATNSSKKMKFQGEPKKPPMNGYQ. A disordered region spans residues 648–764; the sequence is YISNKRKNMT…SGDSSDSDSN (117 aa). Positions 664–674 are enriched in polar residues; sequence PKSSRTTLQSK. A compositionally biased stretch (acidic residues) spans 677 to 745; it reads SEEDDDEEDD…DDDEDEDNES (69 aa). The segment covering 746-758 has biased composition (low complexity); that stretch reads EGSSSSSSSSGDS.

In terms of assembly, homodimer. Part of Pol I pre-initiation complex (PIC), in which Pol I core assembles with RRN3 and promoter-bound UTBF and SL1/TIF-IB complex. Interacts with TOP2A in the context of Pol I complex. Interacts with TBP. Interacts with TAF1A. Interacts with PHF6. Interacts with CEBPA (isoform 1 and isoform 4). Interacts with DDX11. Interacts with NOP53. Interacts with RASL11A. Interacts with DHX33. Binds to IRS1 and PIK3CA. Interacts with ALKBH2. Phosphorylated and activated by PIK3CA.

Its subcellular location is the nucleus. It localises to the nucleolus. Functionally, recognizes the ribosomal RNA gene promoter and activates transcription mediated by RNA polymerase I through cooperative interactions with the transcription factor SL1/TIF-IB complex. It binds specifically to the upstream control element. The chain is Nucleolar transcription factor 1 (Ubtf) from Rattus norvegicus (Rat).